The primary structure comprises 1578 residues: Bromodomain-containing protein DDB_G0270170 (1578 aa).

The segment covering 1–12 (MSLEQQDETVVE) has biased composition (acidic residues). Disordered regions lie at residues 1–39 (MSLE…TYKE), 108–127 (NNNN…NNTE), 151–285 (HYSD…AKEL), and 319–454 (NENI…TTQT). Low complexity predominate over residues 18–35 (SFETNNSTANNTNNNTDN). Basic and acidic residues predominate over residues 152-163 (YSDDESSKEKQD). Low complexity-rich tracts occupy residues 164 to 185 (NINS…SENI) and 197 to 231 (TTPS…TTTN). 2 stretches are compositionally biased toward polar residues: residues 319 to 332 (NENI…STTK) and 340 to 351 (TASTTNTPIITA). Residues 352 to 383 (QQNTTPLSPTQTTTTTTTPTTTTAQQNTPAQT) show a composition bias toward low complexity. Positions 384–395 (ESKPPTTISINI) are enriched in polar residues. Low complexity-rich tracts occupy residues 396–407 (KGSKSPKTTGGK) and 417–433 (VVIS…VATT). A compositionally biased stretch (polar residues) spans 443–454 (STANNNSETTQT). Residues 479–506 (SDSATIQQLQQSISMLEDKIRLISSNNK) adopt a coiled-coil conformation. Disordered regions lie at residues 543–565 (FTKS…YSDD) and 580–730 (IPIP…RMGK). Composition is skewed to low complexity over residues 604–653 (NTST…PPQQ) and 660–686 (TQQE…DTTT). Positions 735 to 841 (VVLTPVFKRC…DVFEKGFPKV (107 aa)) constitute a Bromo domain. Residues 851–903 (KNVDQEKIEKLSNDLKNVTKELEKFKKDDSNSINNNNNNNNNYNNNNNNNNNN) adopt a coiled-coil conformation. Disordered stretches follow at residues 874–969 (KFKK…KVTT), 1039–1167 (HALP…NNNN), 1184–1452 (SIPE…TDSA), and 1480–1544 (EREE…KGNM). Low complexity-rich tracts occupy residues 881 to 911 (NSIN…SSRS), 918 to 961 (SSGS…SSNN), and 1047 to 1061 (SSTH…DSSS). The 83-residue stretch at 957 to 1039 (SSSNNKKYPK…QYKNGEIPQH (83 aa)) folds into the NET domain. The span at 1064-1077 (REIEKLQKQLDRLG) shows a compositional bias: basic and acidic residues. Residues 1092-1107 (HSKRISKPISKARGRK) are compositionally biased toward basic residues. Residues 1112-1167 (SSSNLNNSSNNINNNNNNINNYNNNNNYNNNNNNNLNNNNNNNINSNLNNNLNNNN) are compositionally biased toward low complexity. Residues 1113-1150 (SSNLNNSSNNINNNNNNINNYNNNNNYNNNNNNNLNNN) adopt a coiled-coil conformation. Positions 1192–1204 (TDISESSDSESDS) are enriched in acidic residues. Low complexity-rich tracts occupy residues 1205-1218 (ESGS…YSDS) and 1231-1334 (YNNS…SLTN). Residues 1280 to 1308 (NSNNNNSNNNNNNVNNNNNNHNNNNHNNN) are a coiled coil. The span at 1356 to 1369 (SVASWSFDPTNNKE) shows a compositional bias: polar residues. Positions 1370 to 1386 (SSSSSSTSSTSSTSNTT) are enriched in low complexity. Residues 1387 to 1399 (LTPIIQQSSLTHA) are compositionally biased toward polar residues. Low complexity-rich tracts occupy residues 1400–1424 (SSPI…NNLS) and 1432–1451 (NSPS…NTDS). A coiled-coil region spans residues 1462–1544 (TLKQKEKERV…EKLNNSKGNM (83 aa)). Positions 1480–1538 (EREEKEEELKKEEEKKRIEMEEIKRLAKEKEEREAEETRKQIESERAAAREAREKEKLN) are enriched in basic and acidic residues.

This chain is Bromodomain-containing protein DDB_G0270170, found in Dictyostelium discoideum (Social amoeba).